A 347-amino-acid chain; its full sequence is NADH-ubiquinone oxidoreductase chain 2 (347 aa).

A run of 9 helical transmembrane segments spans residues 3 to 23 (PPIFIIIMTTVISGTMMVLIS), 25 to 45 (HWLLIWIGFEMNMLAIIPILM), 59 to 79 (YFLTQATASMILMLGIIINLL), 111 to 131 (FHFWVPEVTQGISLSSGMILL), 149 to 169 (INPNLLMSMAIMSMLVAGWGG), 200 to 220 (LMHLNLVMYIMMTLGTFMLFM), 242 to 262 (LLILMLMLSLGGLPPLSGFIP), 274 to 294 (NMIIIPTFMAIAALLSLYFYM), and 325 to 345 (LLPPLIIMSTMLLPMTPMMLI).

The protein belongs to the complex I subunit 2 family. As to quaternary structure, core subunit of respiratory chain NADH dehydrogenase (Complex I) which is composed of 45 different subunits. Interacts with TMEM242.

The protein resides in the mitochondrion inner membrane. It catalyses the reaction a ubiquinone + NADH + 5 H(+)(in) = a ubiquinol + NAD(+) + 4 H(+)(out). In terms of biological role, core subunit of the mitochondrial membrane respiratory chain NADH dehydrogenase (Complex I) which catalyzes electron transfer from NADH through the respiratory chain, using ubiquinone as an electron acceptor. Essential for the catalytic activity and assembly of complex I. The chain is NADH-ubiquinone oxidoreductase chain 2 from Ailurus fulgens (Himalayan red panda).